Reading from the N-terminus, the 490-residue chain is GTPase Der (490 aa).

The EngA-type G 1 domain maps to 3–166 (PVIALVGRPN…IALSEFPKDD (164 aa)). GTP is bound by residues 9–16 (GRPNVGKS), 56–60 (DTGGI), and 118–121 (NKVD). The segment at 164–191 (KDDADEPEEGEEEIVAEGEEAKRIPGPS) is disordered. Over residues 166-181 (DADEPEEGEEEIVAEG) the composition is skewed to acidic residues. Over residues 182 to 191 (EEAKRIPGPS) the composition is skewed to basic and acidic residues. An EngA-type G 2 domain is found at 196–369 (IKIAIIGRPN…SVQNSFKSAV (174 aa)). GTP is bound by residues 202–209 (GRPNVGKS), 249–253 (DTAGV), and 314–317 (NKWD). The KH-like domain occupies 370–454 (TRWPTSRLTQ…PIRIEFKGGE (85 aa)). A disordered region spans residues 452 to 490 (GGENPYEGNKNTLTDRQVNKKRRLMSHHKKADKKRRDKR). Residues 470 to 490 (NKKRRLMSHHKKADKKRRDKR) are compositionally biased toward basic residues.

It belongs to the TRAFAC class TrmE-Era-EngA-EngB-Septin-like GTPase superfamily. EngA (Der) GTPase family. In terms of assembly, associates with the 50S ribosomal subunit.

In terms of biological role, GTPase that plays an essential role in the late steps of ribosome biogenesis. The chain is GTPase Der from Pseudomonas fluorescens (strain ATCC BAA-477 / NRRL B-23932 / Pf-5).